A 132-amino-acid polypeptide reads, in one-letter code: ATP synthase epsilon chain (132 aa).

The protein belongs to the ATPase epsilon chain family. As to quaternary structure, F-type ATPases have 2 components, CF(1) - the catalytic core - and CF(0) - the membrane proton channel. CF(1) has five subunits: alpha(3), beta(3), gamma(1), delta(1), epsilon(1). CF(0) has three main subunits: a, b and c.

The protein resides in the cell membrane. In terms of biological role, produces ATP from ADP in the presence of a proton gradient across the membrane. This Desulfitobacterium hafniense (strain Y51) protein is ATP synthase epsilon chain.